The chain runs to 361 residues: Chorismate synthase (361 aa).

Residue R47 coordinates NADP(+). Residues 124 to 126 (RAS), G286, 301 to 305 (KPTAT), and R327 contribute to the FMN site.

Belongs to the chorismate synthase family. Homotetramer. FMNH2 serves as cofactor.

The enzyme catalyses 5-O-(1-carboxyvinyl)-3-phosphoshikimate = chorismate + phosphate. It participates in metabolic intermediate biosynthesis; chorismate biosynthesis; chorismate from D-erythrose 4-phosphate and phosphoenolpyruvate: step 7/7. Functionally, catalyzes the anti-1,4-elimination of the C-3 phosphate and the C-6 proR hydrogen from 5-enolpyruvylshikimate-3-phosphate (EPSP) to yield chorismate, which is the branch point compound that serves as the starting substrate for the three terminal pathways of aromatic amino acid biosynthesis. This reaction introduces a second double bond into the aromatic ring system. The polypeptide is Chorismate synthase (Prochlorococcus marinus (strain NATL2A)).